The chain runs to 256 residues: Vesicle-associated protein 1-1 (256 aa).

The residue at position 1 (M1) is an N-acetylmethionine. The Cytoplasmic segment spans residues 1–232 (MSNIDLIGMS…RRESKKSQSG (232 aa)). S2 is subject to N-acetylserine; in Vesicle-associated protein 1-1, N-terminally processed. In terms of domain architecture, MSP spans 22–142 (LLTVEPLDLQ…EETKLRVTYV (121 aa)). Positions 142–169 (VAPPRPPSPVHEGSEEGSSPRASVSDNG) are disordered. Phosphoserine is present on S149. Positions 157–169 (EGSSPRASVSDNG) are enriched in polar residues. Residues 187-232 (HQENTSEARALITKLTEEKQSAIQLNNRLQRELDQLRRESKKSQSG) are a coiled coil. The chain crosses the membrane as a helical; Anchor for type IV membrane protein span at residues 233 to 253 (GIPFMYVLLVGLIGLILGYIM).

It belongs to the VAMP-associated protein (VAP) (TC 9.B.17) family. Homodimer or homooligomer. Interacts with the cowpea mosaic virus (CPMV) NTP-binding protein (NTB). Interacts with NET3C.

The protein localises to the endoplasmic reticulum membrane. It localises to the protein storage vacuole membrane. Functionally, part of a membrane-cytoskeletal adapter complex that forms a bridge between the endoplasmic reticulum and the plasma membrane. Associates with microtubules. This chain is Vesicle-associated protein 1-1 (PVA11), found in Arabidopsis thaliana (Mouse-ear cress).